Here is a 34-residue protein sequence, read N- to C-terminus: Mu-theraphotoxin-Pspp1 (34 aa).

Cystine bridges form between Cys2–Cys17, Cys9–Cys22, and Cys16–Cys29. Phe34 is subject to Phenylalanine amide.

This sequence belongs to the neurotoxin 10 (Hwtx-1) family. As to expression, expressed by the venom gland.

The protein resides in the secreted. Voltage-gated sodium channel inhibitor. It is unclear if it selectively inhibits Nav1.7/SCN9A or shows similar potency on all sodium channels tested. According to Escoubas et al., 2006 and Nicolas et al., 2019, it is selective over Nav1.7/SCN9A (90% inhibition at 1 uM), versus Nav1.4 and Nav1.6 (35% inhibition), and shows a small inhibition on all other sodium channels (except Nav1.8/SCN10A). According to Goncalves et al., 2019, it shows a similar inhibition on almost all sodium channels tested (Nav1.1/SCN1A (IC(50)=280.3 nM), Nav1.2/SCN2A (IC(50)=73.7 nM), Nav1.3/SCN3A (IC(50)=201.5 nM), Nav1.4/SCN4A (IC(50)&gt;2100 nM), Nav1.5/SCN5A (IC(50)=710.6 nM), Nav1.6/SCN8A (IC(50)=491.2 nM), and Nav1.7/SCN9A (IC(50)=254.3-260 nM)), except Nav1.8/SCN10A. The voltage-dependence of steady-state Nav1.7/SCN9A channel activation and inactivation are not affected, suggesting that is does not act as a gating-modifier toxin but rather blocks or impedes ion flux through the channel pore. The toxin effect is partial and poorly reversible. In addition to its inhibition to sodium channels, it also shows a small inhibition on rat Kv3.4/KCNC4 potassium channels (20% inhibition at 1 uM). In vivo, when tested on pain models, it shows analgesic activity. In Phlogiellus sp. (Tarantula), this protein is Mu-theraphotoxin-Pspp1.